We begin with the raw amino-acid sequence, 187 residues long: Large ribosomal subunit protein uL22 (187 aa).

Positions 159 to 171 are enriched in basic and acidic residues; that stretch reads VSKPTDDAAPKVK. The interval 159–187 is disordered; that stretch reads VSKPTDDAAPKVKKESKRKQRRQLARGEF. Residues 172–187 show a composition bias toward basic residues; that stretch reads KESKRKQRRQLARGEF.

This sequence belongs to the universal ribosomal protein uL22 family.

This chain is Large ribosomal subunit protein uL22 (rpl-17), found in Caenorhabditis elegans.